We begin with the raw amino-acid sequence, 306 residues long: tRNA dimethylallyltransferase (306 aa).

15–22 (GPTASGKS) serves as a coordination point for ATP. 17-22 (TASGKS) is a substrate binding site. The tract at residues 40-43 (DSMQ) is interaction with substrate tRNA.

Belongs to the IPP transferase family. As to quaternary structure, monomer. Mg(2+) is required as a cofactor.

The enzyme catalyses adenosine(37) in tRNA + dimethylallyl diphosphate = N(6)-dimethylallyladenosine(37) in tRNA + diphosphate. Its function is as follows. Catalyzes the transfer of a dimethylallyl group onto the adenine at position 37 in tRNAs that read codons beginning with uridine, leading to the formation of N6-(dimethylallyl)adenosine (i(6)A). The sequence is that of tRNA dimethylallyltransferase from Methylobacterium sp. (strain 4-46).